The chain runs to 140 residues: Alpha-lactalbumin (140 aa).

The N-terminal stretch at 1–19 (MMSLLSLLLLGIALPATQA) is a signal peptide. Positions 20–140 (IDYRKCQASQ…CIEDLDQWRC (121 aa)) constitute a C-type lysozyme domain. 4 cysteine pairs are disulfide-bonded: Cys25–Cys140, Cys47–Cys131, Cys80–Cys96, and Cys92–Cys110. N-linked (GlcNAc...) asparagine glycosylation occurs at Asn63. Ca(2+)-binding residues include Lys98, Asp101, Asp103, Asp106, and Asp107.

Belongs to the glycosyl hydrolase 22 family. Lactose synthase (LS) is a heterodimer of a catalytic component, beta1,4-galactosyltransferase (beta4Gal-T1) and a regulatory component, alpha-lactalbumin (LA). Mammary gland specific. Secreted in milk.

It is found in the secreted. Regulatory subunit of lactose synthase, changes the substrate specificity of galactosyltransferase in the mammary gland making glucose a good acceptor substrate for this enzyme. This enables LS to synthesize lactose, the major carbohydrate component of milk. In other tissues, galactosyltransferase transfers galactose onto the N-acetylglucosamine of the oligosaccharide chains in glycoproteins. The polypeptide is Alpha-lactalbumin (LALBA) (Notamacropus eugenii (Tammar wallaby)).